The primary structure comprises 356 residues: Leucine carboxyl methyltransferase 1 (356 aa).

Residues arginine 78, glycine 101, aspartate 127, 183 to 184 (DL), and glutamate 218 contribute to the S-adenosyl-L-methionine site.

Belongs to the methyltransferase superfamily. LCMT family.

The enzyme catalyses [phosphatase 2A protein]-C-terminal L-leucine + S-adenosyl-L-methionine = [phosphatase 2A protein]-C-terminal L-leucine methyl ester + S-adenosyl-L-homocysteine. In terms of biological role, methylates the carboxyl group of the C-terminal leucine residue of protein phosphatase 2A catalytic subunits to form alpha-leucine ester residues. This chain is Leucine carboxyl methyltransferase 1 (PPM1), found in Cryptococcus neoformans var. neoformans serotype D (strain JEC21 / ATCC MYA-565) (Filobasidiella neoformans).